Consider the following 905-residue polypeptide: DNA mismatch repair protein MutS (905 aa).

The interval 1–95 (MELSLQGSLF…PAWGHHSQLK (95 aa)) is disordered. Positions 38–50 (NLSDADLSKDALA) are enriched in basic and acidic residues. 721–728 (GPNASGKS) is a binding site for ATP.

It belongs to the DNA mismatch repair MutS family.

This protein is involved in the repair of mismatches in DNA. It is possible that it carries out the mismatch recognition step. This protein has a weak ATPase activity. The chain is DNA mismatch repair protein MutS from Synechococcus sp. (strain CC9902).